Consider the following 878-residue polypeptide: von Willebrand factor A domain-containing protein DDB_G0267758 (878 aa).

In terms of domain architecture, VIT spans 36–169 (GLFLTENNKK…TVKITLTITS (134 aa)). The region spanning 316-496 (EFIFLIDCSG…ISLKPMFSNI (181 aa)) is the VWFA domain. Residues 595–623 (SSSSSSSSSSSSSSSSSSSSSSSSSSSSS) show a composition bias toward low complexity. Disordered regions lie at residues 595–638 (SSSS…HRLS) and 752–774 (SVKK…SKTK). The segment covering 624–635 (TTTATTNQNQIH) has biased composition (polar residues).

In Dictyostelium discoideum (Social amoeba), this protein is von Willebrand factor A domain-containing protein DDB_G0267758.